Reading from the N-terminus, the 453-residue chain is Insulinoma-associated protein 1b (453 aa).

The tract at residues M1–I20 is SNAG domain. Positions N140–P179 are disordered. Over residues P162 to V171 the composition is skewed to basic and acidic residues. Residues Y252–H274 form a C2H2-type 1 zinc finger. The disordered stretch occupies residues A298–D318. 3 consecutive C2H2-type zinc fingers follow at residues Y321–H343, L383–H406, and F412–H435.

Belongs to the INSM1 family.

It is found in the nucleus. In terms of biological role, may act as a transcriptional regulator. May play a role in neurogenesis and neuroendocrine cell differentiation during embryonic development. The sequence is that of Insulinoma-associated protein 1b (insm1b) from Danio rerio (Zebrafish).